The primary structure comprises 428 residues: MKIYKLQTPVNAILENIAADKSISHRFAIFSLLTQEENKAQNYLLAQDTLNTLEIIKNLGAKIEQKDSCVKIIPPKEILSPNCILDCGNSGTAMRLMIGFLAGIFGFFVLSGDKYLNNRPMRRISKPLTQIGARIYGRNEANLAPLCIEGQKLKAFNFKSEISSAQVKTAMILSAFRADNVCTFSEISLSRNHSENMLKAMKAPIRVSNDGLSLEINPLKKPLKAQNIIIPNDPSSAFYFVLAAIILPKSQIILKNILLNPTRIEAYKILQKMGAKLEMTITQNDFETIGEIRVESSKLNGIEVKDNIAWLIDEAPALAIAFALAKGKSSLINAKELRVKESDRIAVMVENLKLCGVEARELDDGFEIEGGCELKSSKIKSYGDHRIAMSFAILGLLCGIEIDDSDCIKTSFPNFIEILSNLGARIDY.

Positions 21, 22, and 26 each coordinate 3-phosphoshikimate. K21 is a binding site for phosphoenolpyruvate. The phosphoenolpyruvate site is built by G91 and R119. Positions 164, 166, 313, and 340 each coordinate 3-phosphoshikimate. Q166 provides a ligand contact to phosphoenolpyruvate. Residue D313 is the Proton acceptor of the active site. R344 and R386 together coordinate phosphoenolpyruvate.

The protein belongs to the EPSP synthase family. In terms of assembly, monomer.

Its subcellular location is the cytoplasm. It carries out the reaction 3-phosphoshikimate + phosphoenolpyruvate = 5-O-(1-carboxyvinyl)-3-phosphoshikimate + phosphate. The protein operates within metabolic intermediate biosynthesis; chorismate biosynthesis; chorismate from D-erythrose 4-phosphate and phosphoenolpyruvate: step 6/7. Its function is as follows. Catalyzes the transfer of the enolpyruvyl moiety of phosphoenolpyruvate (PEP) to the 5-hydroxyl of shikimate-3-phosphate (S3P) to produce enolpyruvyl shikimate-3-phosphate and inorganic phosphate. The chain is 3-phosphoshikimate 1-carboxyvinyltransferase from Campylobacter jejuni (strain RM1221).